The sequence spans 314 residues: MIOREX complex component 8 (314 aa).

An EngB-type G domain is found at 132-312; the sequence is TLPEVIFLGG…RYVIFQSCGL (181 aa). GTP is bound by residues 140–147, 173–177, 191–194, 253–256, and 290–292; these read GGTNVGKS, GFTKT, DSPG, TKMD, and SST. Positions 147 and 175 each coordinate Mg(2+).

The protein belongs to the TRAFAC class TrmE-Era-EngA-EngB-Septin-like GTPase superfamily. EngB GTPase family. In terms of assembly, associates with the mitochondrial ribosome. Requires Mg(2+) as cofactor. Sumoylated upon ethanol stress.

It is found in the mitochondrion. Component of MIOREX complexes, large expressome-like assemblies of ribosomes with factors involved in all the steps of post-transcriptional gene expression. The polypeptide is MIOREX complex component 8 (Saccharomyces cerevisiae (strain ATCC 204508 / S288c) (Baker's yeast)).